The following is a 901-amino-acid chain: Pantothenate kinase 2 (901 aa).

Residues 1-10 (MAGQEDEYDP) are compositionally biased toward acidic residues. The segment at 1 to 50 (MAGQEDEYDPILDNKREAEAKSQVSVAADKNMAPSTSGTPIHRSGSRPQL) is disordered. The interval 1-466 (MAGQEDEYDP…LGDLDEKISW (466 aa)) is pantothenate kinase. The segment at 467–901 (MEKFVRRGTE…CVCRYEPPSL (435 aa)) is 4'-phosphopantetheine phosphatase. The Mn(2+) site is built by Asp731, Asn732, and Asp767. The short motif at 851–855 (EGMGR) is the Subfamily II EGMGR motif element.

In the N-terminal section; belongs to the type II pantothenate kinase family. The protein in the C-terminal section; belongs to the damage-control phosphatase family. Phosphopantetheine phosphatase II subfamily. Mn(2+) serves as cofactor. The cofactor is Ni(2+). In terms of tissue distribution, highly expressed in leaves and developing seeds. Expressed in roots, stems and flowers.

The enzyme catalyses (R)-pantothenate + ATP = (R)-4'-phosphopantothenate + ADP + H(+). It catalyses the reaction (R)-4'-phosphopantothenate + H2O = (R)-pantothenate + phosphate. The catalysed reaction is (R)-4'-phosphopantetheine + H2O = (R)-pantetheine + phosphate. It carries out the reaction (R)-4'-phosphopantetheine sulfonate + H2O = (R)-pantetheine sulfonate + phosphate. Its pathway is cofactor biosynthesis; coenzyme A biosynthesis; CoA from (R)-pantothenate: step 1/5. Its activity is regulated as follows. Activity is strongly promoted by Co(2+), Ni(2+) and Mn(2+). Activity is inhibited by EDTA. Its function is as follows. Catalyzes the phosphorylation of pantothenate the first step in CoA biosynthesis. May play a role in the physiological regulation of the intracellular CoA concentration. Functionally redudant with PANK1. The phosphatase activity shows preference for normal or oxidatively damaged intermediates of 4'-phosphopantetheine, which provides strong indirect evidence that the phosphatase activity pre-empts damage in the CoA pathway. Hydrolyzing excess 4'-phosphopantetheine could constitute a directed overflow mechanism to prevent its oxidation to the S-sulfonate, sulfonate, or other forms. Hydrolyzing 4'-phosphopantetheine sulfonate or S-sulfonate would forestall their conversion to inactive forms of CoA and acyl carrier protein. The sequence is that of Pantothenate kinase 2 (PANK2) from Arabidopsis thaliana (Mouse-ear cress).